The following is a 281-amino-acid chain: UPF0750 membrane protein YvjA (281 aa).

5 consecutive transmembrane segments (helical) span residues 14 to 34 (YVYI…FLLP), 56 to 76 (AAYV…ILLG), 77 to 97 (GKFG…VFLT), 108 to 128 (LLAA…VYLG), and 149 to 169 (SLGK…MIVF).

Belongs to the UPF0750 family.

Its subcellular location is the cell membrane. This is UPF0750 membrane protein YvjA (yvjA) from Bacillus subtilis (strain 168).